Reading from the N-terminus, the 241-residue chain is Fatty acid metabolism regulator protein (241 aa).

The HTH gntR-type domain maps to 11–79; the sequence is QSPAALAEEY…HGKPTKVNNI (69 aa). Residues 39–58 constitute a DNA-binding region (H-T-H motif); the sequence is ERDLADKIGVTRTTLREVLQ.

As to quaternary structure, homodimer.

The protein localises to the cytoplasm. Multifunctional regulator of fatty acid metabolism. This chain is Fatty acid metabolism regulator protein, found in Haemophilus influenzae (strain ATCC 51907 / DSM 11121 / KW20 / Rd).